We begin with the raw amino-acid sequence, 302 residues long: tRNA-cytidine(32) 2-sulfurtransferase (302 aa).

Positions 45 to 50 match the PP-loop motif motif; the sequence is SGGKDS. Residues C120, C123, and C211 each coordinate [4Fe-4S] cluster.

The protein belongs to the TtcA family. As to quaternary structure, homodimer. Mg(2+) is required as a cofactor. The cofactor is [4Fe-4S] cluster.

It localises to the cytoplasm. The catalysed reaction is cytidine(32) in tRNA + S-sulfanyl-L-cysteinyl-[cysteine desulfurase] + AH2 + ATP = 2-thiocytidine(32) in tRNA + L-cysteinyl-[cysteine desulfurase] + A + AMP + diphosphate + H(+). The protein operates within tRNA modification. Functionally, catalyzes the ATP-dependent 2-thiolation of cytidine in position 32 of tRNA, to form 2-thiocytidine (s(2)C32). The sulfur atoms are provided by the cysteine/cysteine desulfurase (IscS) system. The chain is tRNA-cytidine(32) 2-sulfurtransferase from Aeromonas salmonicida (strain A449).